Consider the following 128-residue polypeptide: Large ribosomal subunit protein bL21 (128 aa).

The tract at residues 104–128 (GKTPTVGPRPKKEKVVEPAEGEGDH) is disordered. The segment covering 116 to 128 (EKVVEPAEGEGDH) has biased composition (basic and acidic residues).

The protein belongs to the bacterial ribosomal protein bL21 family. Part of the 50S ribosomal subunit. Contacts protein L20.

Functionally, this protein binds to 23S rRNA in the presence of protein L20. The polypeptide is Large ribosomal subunit protein bL21 (Nitrobacter hamburgensis (strain DSM 10229 / NCIMB 13809 / X14)).